Reading from the N-terminus, the 270-residue chain is Acyl-[acyl-carrier-protein]--UDP-N-acetylglucosamine O-acyltransferase (270 aa).

This sequence belongs to the transferase hexapeptide repeat family. LpxA subfamily. As to quaternary structure, homotrimer.

The protein localises to the cytoplasm. The enzyme catalyses a (3R)-hydroxyacyl-[ACP] + UDP-N-acetyl-alpha-D-glucosamine = a UDP-3-O-[(3R)-3-hydroxyacyl]-N-acetyl-alpha-D-glucosamine + holo-[ACP]. It participates in glycolipid biosynthesis; lipid IV(A) biosynthesis; lipid IV(A) from (3R)-3-hydroxytetradecanoyl-[acyl-carrier-protein] and UDP-N-acetyl-alpha-D-glucosamine: step 1/6. Functionally, involved in the biosynthesis of lipid A, a phosphorylated glycolipid that anchors the lipopolysaccharide to the outer membrane of the cell. In Helicobacter acinonychis (strain Sheeba), this protein is Acyl-[acyl-carrier-protein]--UDP-N-acetylglucosamine O-acyltransferase.